The primary structure comprises 398 residues: Tryptophan synthase beta chain (398 aa).

An N6-(pyridoxal phosphate)lysine modification is found at Lys-88.

Belongs to the TrpB family. As to quaternary structure, tetramer of two alpha and two beta chains. The cofactor is pyridoxal 5'-phosphate.

It catalyses the reaction (1S,2R)-1-C-(indol-3-yl)glycerol 3-phosphate + L-serine = D-glyceraldehyde 3-phosphate + L-tryptophan + H2O. It functions in the pathway amino-acid biosynthesis; L-tryptophan biosynthesis; L-tryptophan from chorismate: step 5/5. The beta subunit is responsible for the synthesis of L-tryptophan from indole and L-serine. In Actinobacillus succinogenes (strain ATCC 55618 / DSM 22257 / CCUG 43843 / 130Z), this protein is Tryptophan synthase beta chain.